Reading from the N-terminus, the 124-residue chain is Small ribosomal subunit protein bS6 (124 aa).

Positions 99 to 124 are disordered; the sequence is PLPAPRVMPGSEAAQQQQAEAAASAD. Residues 109–124 show a composition bias toward low complexity; the sequence is SEAAQQQQAEAAASAD.

The protein belongs to the bacterial ribosomal protein bS6 family.

Its function is as follows. Binds together with bS18 to 16S ribosomal RNA. The protein is Small ribosomal subunit protein bS6 of Synechococcus sp. (strain CC9605).